Reading from the N-terminus, the 623-residue chain is Heterogeneous nuclear ribonucleoprotein Q (623 aa).

An N-acetylalanine modification is found at alanine 2. Serine 159 is subject to Phosphoserine. 3 consecutive RRM domains span residues 162–241 (TEIF…ISVA), 243–325 (NRLF…WADP), and 338–408 (KVLF…FAKP). A Glycyl lysine isopeptide (Lys-Gly) (interchain with G-Cter in SUMO2) cross-link involves residue lysine 168. Position 221 is an N6-acetyllysine (lysine 221). Lysine 363 bears the N6-acetyllysine mark. Position 373 is a phosphotyrosine (tyrosine 373). Residues 400 to 561 (NIEIVFAKPP…GARGGRGGNV (162 aa)) are interaction with APOBEC1. At arginine 444 the chain carries Asymmetric dimethylarginine; by PRMT1; alternate. Arginine 444 bears the Omega-N-methylarginine; by PRMT1; alternate mark. 6 repeat units span residues 448 to 450 (RGG), 451 to 453 (RGG), 460 to 464 (YYGYE), 469 to 472 (YYGY), 478 to 480 (RGG), and 485 to 488 (YYGY). An 8 X 3 AA repeats of R-G-G region spans residues 448–559 (RGGRGGYGYP…VRGARGGRGG (112 aa)). The interval 460–488 (YYGYEDYYDYYGYDYHNYRGGYEDPYYGY) is 3 X 4 AA repeats of Y-Y-G-Y. Arginine 496 carries the post-translational modification Omega-N-methylarginine; by PRMT1. The tract at residues 497–623 (GRGGRGARGA…YQDTFGQQWK (127 aa)) is disordered. The 1-4 repeat unit spans residues 498-500 (RGG). Residues 504-522 (RGAAPSRGRGAAPPRGRAG) are compositionally biased toward low complexity. Position 510 is an asymmetric dimethylarginine; by PRMT1 (arginine 510). Arginine 518 bears the Asymmetric dimethylarginine; by PRMT1; alternate mark. Arginine 518 is subject to Omega-N-methylarginine; by PRMT1; alternate. Positions 518 to 549 (RGRAGYSQRGGPGSARGVRGARGGAQQQRGRG) are interaction with SMN. At arginine 526 the chain carries Asymmetric dimethylarginine; alternate. Omega-N-methylarginine; alternate is present on arginine 526. One copy of the 1-5 repeat lies at 526 to 528 (RGG). Residues arginine 536 and arginine 539 each carry the asymmetric dimethylarginine; by PRMT1; alternate modification. 2 positions are modified to omega-N-methylarginine; by PRMT1; alternate: arginine 536 and arginine 539. Tandem repeats lie at residues 539-541 (RGG), 554-556 (RGG), and 557-559 (RGG). Over residues 550-562 (VRGARGGRGGNVG) the composition is skewed to gly residues. Positions 564-578 (KRKADGYNQPDTKRR) match the Bipartite nuclear localization signal motif. Residues 580–595 (TNNQNWGSQPIAQQPL) are compositionally biased toward polar residues. Serine 587 carries the post-translational modification Phosphoserine. A Glycyl lysine isopeptide (Lys-Gly) (interchain with G-Cter in SUMO2) cross-link involves residue lysine 607. Positions 611-623 (QEFYQDTFGQQWK) are enriched in polar residues.

As to quaternary structure, identified in the spliceosome C complex. Component of the coding region determinant (CRD)-mediated complex, composed of DHX9, HNRNPU, IGF2BP1, SYNCRIP and YBX1. Identified in a mRNP complex, at least composed of DHX9, DDX3X, ELAVL1, HNRNPU, IGF2BP1, ILF3, PABPC1, PCBP2, PTBP2, STAU1, STAU2, SYNCRIP and YBX1. Identified in a mRNP granule complex, at least composed of ACTB, ACTN4, DHX9, ERG, HNRNPA1, HNRNPA2B1, HNRNPAB, HNRNPD, HNRNPL, HNRNPR, HNRNPU, HSPA1, HSPA8, IGF2BP1, ILF2, ILF3, NCBP1, NCL, PABPC1, PABPC4, PABPN1, RPLP0, RPS3, RPS3A, RPS4X, RPS8, RPS9, SYNCRIP, YBX1 and untranslated mRNAs. Interacts with GTPBP1. Isoform 1 is a component of the APOB mRNA editosome complex. Isoform 1 interacts with APOBEC1 and A1CF. Part of a complex associated with the FOS mCRD domain and consisting of PABPC1, PAIP1, CSDE1/UNR, HNRPD and SYNCRIP. Isoform 2 interacts with HNRPR. Interacts with POLR2A hyperphosphorylated C-terminal domain. Interacts with HABP4. Identified in a histone pre-mRNA complex, at least composed of ERI1, LSM11, SLBP, SNRPB, SYNCRIP and YBX1. Isoform 1 and isoform 2 interact with SMN. Isoform 2 interacts through its C-terminal domain with SYT7, SYT8 and SYT9. The non-phosphorylated and phosphorylated forms are colocalized with PAIP1 in polysomes. Post-translationally, phosphorylated on tyrosine. The membrane-bound form found in microsomes is phosphorylated in vitro by insulin receptor tyrosine kinase (INSR). Phosphorylation is inhibited upon binding to RNA, whereas the cytoplasmic form is poorly phosphorylated. Ubiquitous. Detected in heart, brain, spleen, lung, liver, skeletal muscle, adipocytes, kidney and testis.

Its subcellular location is the nucleus. The protein resides in the nucleoplasm. It localises to the microsome. It is found in the cytoplasm. In terms of biological role, heterogeneous nuclear ribonucleoprotein (hnRNP) implicated in mRNA processing mechanisms. Component of the CRD-mediated complex that promotes MYC mRNA stability. Isoform 1 and isoform 2 are associated in vitro with pre-mRNA, splicing intermediates and mature mRNA protein complexes. Isoform 1 binds to apoB mRNA AU-rich sequences. Isoform 1 is part of the APOB mRNA editosome complex and may modulate the postranscriptional C to U RNA-editing of the APOB mRNA through either by binding to A1CF (APOBEC1 complementation factor), to APOBEC1 or to RNA itself. May be involved in translationally coupled mRNA turnover. Implicated with other RNA-binding proteins in the cytoplasmic deadenylation/translational and decay interplay of the FOS mRNA mediated by the major coding-region determinant of instability (mCRD) domain. Interacts in vitro preferentially with poly(A) and poly(U) RNA sequences. Isoform 2 may be involved in cytoplasmic vesicle-based mRNA transport through interaction with synaptotagmins. The protein is Heterogeneous nuclear ribonucleoprotein Q (Syncrip) of Mus musculus (Mouse).